The chain runs to 544 residues: Lariat debranching enzyme (544 aa).

Positions 8, 10, 39, and 84 each coordinate a divalent metal cation. Residues 124-154 (SGIFKSHDYRKGHFECPPYNSSTIRSIYHVR) form a lariat recognition loop region. Lys-128 carries the post-translational modification N6-acetyllysine. Residues His-174, His-226, and His-228 each coordinate a divalent metal cation. The span at 395–412 (EYEEQDDVESNDSGEDQS) shows a compositional bias: acidic residues. The tract at residues 395–463 (EYEEQDDVES…PSDQASEFSA (69 aa)) is disordered. Over residues 413–425 (EYNTDTSALSSIN) the composition is skewed to polar residues. Positions 429–439 (IMLDEEEDEDS) are enriched in acidic residues. Residues 445 to 463 (SGMNTPSVEPSDQASEFSA) are compositionally biased toward polar residues. A phosphoserine mark is found at Ser-464, Ser-474, Ser-478, Ser-479, Ser-485, Ser-499, and Ser-514. Residues 476 to 544 (IVSSDDTVDS…AVDDDDDDAA (69 aa)) form a disordered region. Residues 512 to 522 (RLSDEHEPEQR) show a composition bias toward basic and acidic residues.

It belongs to the lariat debranching enzyme family. It depends on Fe(2+) as a cofactor. The cofactor is Zn(2+). Requires Mn(2+) as cofactor. In terms of tissue distribution, ubiquitously expressed, strongest expression in the spinal cord and brainstem.

Its subcellular location is the nucleus. Its activity is regulated as follows. Active in presence of diverse metals including Fe(2+), Zn(2+), Mn(2+). Also activated by Ca(2+). Binds two metal cations in two adjacent alpha and beta metal-binding pockets. Cleaves the 2'-5' phosphodiester linkage at the branch point of excised lariat intron RNA and converts them into linear molecules that can be subsequently degraded, thereby facilitating ribonucleotide turnover. Linked to its role in pre-mRNA processing mechanism, may also participate in retrovirus replication via an RNA lariat intermediate in cDNA synthesis and have an antiviral cell-intrinsic defense function in the brainstem. The protein is Lariat debranching enzyme (DBR1) of Homo sapiens (Human).